We begin with the raw amino-acid sequence, 485 residues long: PTS system arbutin-, cellobiose-, and salicin-specific EIIBC component (485 aa).

The 88-residue stretch at 1 to 88 folds into the PTS EIIB type-1 domain; the sequence is MAKNYAALAR…VSLLPGDMQP (88 aa). Cys28 serves as the catalytic Phosphocysteine intermediate; for EIIB activity. Helical transmembrane passes span 102–122, 147–167, 177–197, 207–227, 254–274, 285–305, 330–350, 363–383, 389–409, and 433–453; these read IGAGILDALIGTMSPLIPAII, LTILNVIGDGAFFFLPLMVAA, MSLAIAIAGVLVHPSFIELMA, FALIPVTAVKYTYTVIPALVM, LIVLIAAPLAILLIGPIGIWI, IHGYLGWLSVAIMGALWPLLV, VMPSEIGANLSLGGSSLAVAW, AAAASAIMAGISEPALYGVAI, LIASLISGFICGAVAGMAGLA, and IVWVFAVMALAVVLSFILTLL. The PTS EIIC type-1 domain maps to 108–470; sequence DALIGTMSPL…VEEAAAQARK (363 aa).

It is found in the cell inner membrane. In terms of biological role, the phosphoenolpyruvate-dependent sugar phosphotransferase system (sugar PTS), a major carbohydrate active -transport system, catalyzes the phosphorylation of incoming sugar substrates concomitantly with their translocation across the cell membrane. This system is involved in arbutin, cellobiose, and salicin transport. The chain is PTS system arbutin-, cellobiose-, and salicin-specific EIIBC component (ascF) from Escherichia coli (strain K12).